We begin with the raw amino-acid sequence, 906 residues long: Protein translocase subunit SecA (906 aa).

ATP-binding positions include Gln90, 108–112 (GEGKT), and Asp503. Residues 845–882 (TAAEAPASVPQPQAAVAPQPAPELVGADNGESQPQAWG) are disordered. Positions 846 to 862 (AAEAPASVPQPQAAVAP) are enriched in low complexity. Zn(2+)-binding residues include Cys890, Cys892, Cys901, and His902.

The protein belongs to the SecA family. Monomer and homodimer. Part of the essential Sec protein translocation apparatus which comprises SecA, SecYEG and auxiliary proteins SecDF-YajC and YidC. It depends on Zn(2+) as a cofactor.

The protein localises to the cell inner membrane. Its subcellular location is the cytoplasm. The catalysed reaction is ATP + H2O + cellular proteinSide 1 = ADP + phosphate + cellular proteinSide 2.. In terms of biological role, part of the Sec protein translocase complex. Interacts with the SecYEG preprotein conducting channel. Has a central role in coupling the hydrolysis of ATP to the transfer of proteins into and across the cell membrane, serving both as a receptor for the preprotein-SecB complex and as an ATP-driven molecular motor driving the stepwise translocation of polypeptide chains across the membrane. This Cereibacter sphaeroides (strain ATCC 17025 / ATH 2.4.3) (Rhodobacter sphaeroides) protein is Protein translocase subunit SecA.